Consider the following 320-residue polypeptide: Fe-S cluster assembly protein dre2 (320 aa).

Positions 1 to 130 (MAKQTLLLSP…KPDIEEMQAV (130 aa)) are N-terminal SAM-like domain. Residues 131 to 213 (PLRLGRKNDH…DNLLDDSELS (83 aa)) are linker. A disordered region spans residues 141–166 (LAGAPSLEGSAAEHPFPPEVSEGKTA). Residues C222, C233, C236, and C238 each coordinate [2Fe-2S] cluster. Residues 222 to 238 (CRPKAGKRRRACKDCTC) are fe-S binding site A. Residues C283, C286, C294, and C297 each coordinate [4Fe-4S] cluster. Short sequence motifs (cx2C motif) lie at residues 283–286 (CGNC) and 294–297 (CEGC). The segment at 283–297 (CGNCSLGDAFRCEGC) is fe-S binding site B.

The protein belongs to the anamorsin family. As to quaternary structure, monomer. Interacts with tah18. Interacts with mia40. Requires [2Fe-2S] cluster as cofactor. It depends on [4Fe-4S] cluster as a cofactor.

It is found in the cytoplasm. The protein resides in the mitochondrion intermembrane space. Its function is as follows. Component of the cytosolic iron-sulfur (Fe-S) protein assembly (CIA) machinery required for the maturation of extramitochondrial Fe-S proteins. Part of an electron transfer chain functioning in an early step of cytosolic Fe-S biogenesis, facilitating the de novo assembly of a [4Fe-4S] cluster on the scaffold complex cfd1-nbp35. Electrons are transferred to dre2 from NADPH via the FAD- and FMN-containing protein tah18. Tah18-dre2 are also required for the assembly of the diferric tyrosyl radical cofactor of ribonucleotide reductase (RNR), probably by providing electrons for reduction during radical cofactor maturation in the catalytic small subunit rnr2. This is Fe-S cluster assembly protein dre2 from Neosartorya fischeri (strain ATCC 1020 / DSM 3700 / CBS 544.65 / FGSC A1164 / JCM 1740 / NRRL 181 / WB 181) (Aspergillus fischerianus).